Reading from the N-terminus, the 227-residue chain is Cytidylate kinase (227 aa).

12-20 is an ATP binding site; the sequence is GPSGAGKGT.

Belongs to the cytidylate kinase family. Type 1 subfamily.

Its subcellular location is the cytoplasm. It carries out the reaction CMP + ATP = CDP + ADP. The catalysed reaction is dCMP + ATP = dCDP + ADP. The chain is Cytidylate kinase from Salmonella arizonae (strain ATCC BAA-731 / CDC346-86 / RSK2980).